Here is a 330-residue protein sequence, read N- to C-terminus: Methionyl-tRNA formyltransferase (330 aa).

Serine 116–proline 119 provides a ligand contact to (6S)-5,6,7,8-tetrahydrofolate.

Belongs to the Fmt family.

The catalysed reaction is L-methionyl-tRNA(fMet) + (6R)-10-formyltetrahydrofolate = N-formyl-L-methionyl-tRNA(fMet) + (6S)-5,6,7,8-tetrahydrofolate + H(+). Functionally, attaches a formyl group to the free amino group of methionyl-tRNA(fMet). The formyl group appears to play a dual role in the initiator identity of N-formylmethionyl-tRNA by promoting its recognition by IF2 and preventing the misappropriation of this tRNA by the elongation apparatus. The sequence is that of Methionyl-tRNA formyltransferase from Nitratidesulfovibrio vulgaris (strain ATCC 29579 / DSM 644 / CCUG 34227 / NCIMB 8303 / VKM B-1760 / Hildenborough) (Desulfovibrio vulgaris).